We begin with the raw amino-acid sequence, 444 residues long: Acyl-CoA (8-3)-desaturase (444 aa).

An N-acetylmethionine modification is found at Met-1. Residues 1–121 lie on the Cytoplasmic side of the membrane; the sequence is MAPDPVAAKT…FRELRATVEQ (121 aa). A Cytochrome b5 heme-binding domain is found at 17-94; sequence PRYFTWDEVA…MNSLLIGELS (78 aa). The chain crosses the membrane as a helical span at residues 122-142; that stretch reads MGLMKANHVFFLLYLLHILLL. Topologically, residues 143–146 are lumenal; sequence DGAA. The helical transmembrane segment at 147-167 threads the bilayer; the sequence is WLTLWIFGTSFLPFLLCAVLL. The Cytoplasmic portion of the chain corresponds to 168 to 267; that stretch reads TAAQIQAGWL…PYNHQHKYFF (100 aa). The Histidine box-1 signature appears at 179–183; it reads HDLGH. The short motif at 216-220 is the Histidine box-2 element; the sequence is HFQHH. A helical membrane pass occupies residues 268-288; that stretch reads LIGPPALVPFFFQWYVFYFVI. Residues 289–305 are Lumenal-facing; that stretch reads QRKKWVDLAWMITFYIR. The chain crosses the membrane as a helical span at residues 306–326; that stretch reads LLLTYVPLLGLKAFLGLYFIV. At 327-444 the chain is on the cytoplasmic side; it reads RFLESNWFVW…QLWLDAYLHQ (118 aa). The Histidine box-3 signature appears at 382 to 386; sequence QIEHH.

Belongs to the fatty acid desaturase type 1 family. As to expression, widely expressed. Expressed in brain, liver and thymus (at protein level). Isoform 1 seems to be more abundant than isoform 2. Expression of isoform 2 is very low in spleen and not detectable in skeletal muscle.

Its subcellular location is the endoplasmic reticulum membrane. It is found in the mitochondrion. The enzyme catalyses (8Z,11Z,14Z)-eicosatrienoyl-CoA + 2 Fe(II)-[cytochrome b5] + O2 + 2 H(+) = (5Z,8Z,11Z,14Z)-eicosatetraenoyl-CoA + 2 Fe(III)-[cytochrome b5] + 2 H2O. It carries out the reaction (8Z,11Z,14Z,17Z)-eicosatetraenoyl-CoA + 2 Fe(II)-[cytochrome b5] + O2 + 2 H(+) = (5Z,8Z,11Z,14Z,17Z)-eicosapentaenoyl-CoA + 2 Fe(III)-[cytochrome b5] + 2 H2O. It catalyses the reaction (11E)-octadecenoyl-CoA + 2 Fe(II)-[cytochrome b5] + O2 + 2 H(+) = (5Z,11E)-octadecadienoyl-CoA + 2 Fe(III)-[cytochrome b5] + 2 H2O. Its pathway is lipid metabolism; polyunsaturated fatty acid biosynthesis. In terms of biological role, acts as a front-end fatty acyl-coenzyme A (CoA) desaturase that introduces a cis double bond at carbon 5 located between a preexisting double bond and the carboxyl end of the fatty acyl chain. Involved in biosynthesis of highly unsaturated fatty acids (HUFA) from the essential polyunsaturated fatty acids (PUFA) linoleic acid (LA) (18:2n-6) and alpha-linolenic acid (ALA) (18:3n-3) precursors. Specifically, desaturates dihomo-gamma-linoleoate (DGLA) (20:3n-6) and eicosatetraenoate (ETA) (20:4n-3) to generate arachidonate (AA) (20:4n-6) and eicosapentaenoate (EPA) (20:5n-3), respectively. As a rate limiting enzyme for DGLA (20:3n-6) and AA (20:4n-6)-derived eicosanoid biosynthesis, controls the metabolism of inflammatory lipids like prostaglandin E2, critical for efficient acute inflammatory response and maintenance of epithelium homeostasis. Contributes to membrane phospholipid biosynthesis by providing AA (20:4n-6) as a major acyl chain esterified into phospholipids. In particular, regulates phosphatidylinositol-4,5-bisphosphate levels, modulating inflammatory cytokine production in T-cells. Also desaturates (11E)-octadecenoate (trans-vaccenoate)(18:1n-9), a metabolite in the biohydrogenation pathway of LA (18:2n-6). Functionally, does not exhibit any catalytic activity toward 20:3n-6, but it may enhance FADS2 activity. This Papio anubis (Olive baboon) protein is Acyl-CoA (8-3)-desaturase.